A 361-amino-acid polypeptide reads, in one-letter code: Probable cinnamyl alcohol dehydrogenase (361 aa).

Cys48 is a Zn(2+) binding site. Thr50 contacts NADP(+). Zn(2+)-binding residues include His70, Glu71, Cys101, Cys104, Cys107, Cys115, and Cys164. Residues Thr168, 189–194 (GLGGVG), 212–217 (SSSDKK), Thr252, Gly276, and 299–301 (SFI) contribute to the NADP(+) site.

This sequence belongs to the zinc-containing alcohol dehydrogenase family. In terms of assembly, homodimer. Zn(2+) is required as a cofactor.

It carries out the reaction (E)-cinnamyl alcohol + NADP(+) = (E)-cinnamaldehyde + NADPH + H(+). The catalysed reaction is (E)-coniferol + NADP(+) = (E)-coniferaldehyde + NADPH + H(+). The enzyme catalyses (E)-sinapyl alcohol + NADP(+) = (E)-sinapaldehyde + NADPH + H(+). It catalyses the reaction (E)-4-coumaroyl alcohol + NADP(+) = (E)-4-coumaraldehyde + NADPH + H(+). It carries out the reaction (E)-caffeyl alcohol + NADP(+) = (E)-caffeyl aldehyde + NADPH + H(+). It participates in aromatic compound metabolism; phenylpropanoid biosynthesis. Its function is as follows. Involved in lignin biosynthesis. Catalyzes the final step specific for the production of lignin monomers. Catalyzes the NADPH-dependent reduction of coniferaldehyde, 5-hydroxyconiferaldehyde, sinapaldehyde, 4-coumaraldehyde and caffeyl aldehyde to their respective alcohols. This Lolium perenne (Perennial ryegrass) protein is Probable cinnamyl alcohol dehydrogenase.